A 477-amino-acid polypeptide reads, in one-letter code: UDP-glycosyltransferase 71K1 (477 aa).

Residues S285, W350–A351, H368–E376, and Y390–Q393 contribute to the UDP-alpha-D-glucose site.

This sequence belongs to the UDP-glycosyltransferase family.

Functionally, glycosyltransferase that possesses chalcone and flavonol 2'-O-glycosyltransferase activity. Converts phloretin to phlorizin (phloretin 2'-O-glucoside), a potent antioxidant. Possesses glycosyltransferase activity toward quercetin, isoliquiritigenin, butein and caffeic acid. The chain is UDP-glycosyltransferase 71K1 from Malus domestica (Apple).